Reading from the N-terminus, the 234-residue chain is Accessory gland protein Acp29AB (234 aa).

The N-terminal stretch at 1 to 21 is a signal peptide; sequence MYASNLLYLLALWNLWDLSGG. N-linked (GlcNAc...) asparagine glycans are attached at residues N61 and N164. In terms of domain architecture, C-type lectin spans 137-234; that stretch reads VTCRKMNGHL…SFVCQADQWA (98 aa). Intrachain disulfides connect C139-C228 and C207-C220.

In terms of tissue distribution, main cells of the accessory gland and in seminal fluid.

It is found in the secreted. Responsible for physiological and behavioral changes in mated female flies. This chain is Accessory gland protein Acp29AB (Acp29AB), found in Drosophila melanogaster (Fruit fly).